A 213-amino-acid chain; its full sequence is ER lumen protein-retaining receptor (213 aa).

At 1–2 (MN) the chain is on the lumenal side. A helical membrane pass occupies residues 3–21 (IFRITADLAHAVAIVILLL). The Cytoplasmic portion of the chain corresponds to 22–35 (KIWKSRSCEGISGR). A helical transmembrane segment spans residues 36-53 (SQILFAVTFFTRYLDLFT). Residues 54-61 (SFYSLYNT) lie on the Lumenal side of the membrane. Residues 62–80 (VMKVLFLAGSIGTVYLMWV) form a helical membrane-spanning segment. The Cytoplasmic segment spans residues 81 to 96 (KFKATYDRNNDTFRIE). A helical membrane pass occupies residues 97 to 110 (FLVIPSIILALIIN). At 111 to 117 (HEFMFME) the chain is on the lumenal side. Residues 118–137 (VMWTFSIYLEAVAIMPQLFM) form a helical membrane-spanning segment. Residues 138 to 149 (LSRTGNAETITA) lie on the Cytoplasmic side of the membrane. A helical membrane pass occupies residues 150–168 (HYLFALGSYRFLYIFNWVY). Topologically, residues 169–178 (RYYTESFFDP) are lumenal. A helical membrane pass occupies residues 179-199 (IAVVAGIVQTVLYADFFYLYI). Topologically, residues 200–213 (TRVIQSNRQFEMSA) are cytoplasmic.

Belongs to the ERD2 family.

Its subcellular location is the endoplasmic reticulum membrane. Functionally, required for the retention of luminal endoplasmic reticulum proteins. Determines the specificity of the luminal ER protein retention system. Also required for normal vesicular traffic through the Golgi. The chain is ER lumen protein-retaining receptor (erd-2.1) from Caenorhabditis briggsae.